The sequence spans 360 residues: Phenylalanine--tRNA ligase alpha subunit (360 aa).

Position 260 (glutamate 260) interacts with Mg(2+).

This sequence belongs to the class-II aminoacyl-tRNA synthetase family. Phe-tRNA synthetase alpha subunit type 1 subfamily. Tetramer of two alpha and two beta subunits. Mg(2+) is required as a cofactor.

The protein resides in the cytoplasm. It catalyses the reaction tRNA(Phe) + L-phenylalanine + ATP = L-phenylalanyl-tRNA(Phe) + AMP + diphosphate + H(+). The sequence is that of Phenylalanine--tRNA ligase alpha subunit from Rhizobium rhizogenes (strain K84 / ATCC BAA-868) (Agrobacterium radiobacter).